We begin with the raw amino-acid sequence, 205 residues long: Thiamine-phosphate synthase (205 aa).

Residues 37 to 41 and asparagine 69 contribute to the 4-amino-2-methyl-5-(diphosphooxymethyl)pyrimidine site; that span reads QVREK. Aspartate 70 and aspartate 89 together coordinate Mg(2+). A 4-amino-2-methyl-5-(diphosphooxymethyl)pyrimidine-binding site is contributed by serine 108. 134–136 contributes to the 2-[(2R,5Z)-2-carboxy-4-methylthiazol-5(2H)-ylidene]ethyl phosphate binding site; that stretch reads TGS. Lysine 137 contacts 4-amino-2-methyl-5-(diphosphooxymethyl)pyrimidine. Residues glycine 165 and 185-186 each bind 2-[(2R,5Z)-2-carboxy-4-methylthiazol-5(2H)-ylidene]ethyl phosphate; that span reads IS.

This sequence belongs to the thiamine-phosphate synthase family. The cofactor is Mg(2+).

The catalysed reaction is 2-[(2R,5Z)-2-carboxy-4-methylthiazol-5(2H)-ylidene]ethyl phosphate + 4-amino-2-methyl-5-(diphosphooxymethyl)pyrimidine + 2 H(+) = thiamine phosphate + CO2 + diphosphate. It catalyses the reaction 2-(2-carboxy-4-methylthiazol-5-yl)ethyl phosphate + 4-amino-2-methyl-5-(diphosphooxymethyl)pyrimidine + 2 H(+) = thiamine phosphate + CO2 + diphosphate. The enzyme catalyses 4-methyl-5-(2-phosphooxyethyl)-thiazole + 4-amino-2-methyl-5-(diphosphooxymethyl)pyrimidine + H(+) = thiamine phosphate + diphosphate. Its pathway is cofactor biosynthesis; thiamine diphosphate biosynthesis; thiamine phosphate from 4-amino-2-methyl-5-diphosphomethylpyrimidine and 4-methyl-5-(2-phosphoethyl)-thiazole: step 1/1. Condenses 4-methyl-5-(beta-hydroxyethyl)thiazole monophosphate (THZ-P) and 2-methyl-4-amino-5-hydroxymethyl pyrimidine pyrophosphate (HMP-PP) to form thiamine monophosphate (TMP). The polypeptide is Thiamine-phosphate synthase (Clostridium botulinum (strain Kyoto / Type A2)).